Consider the following 880-residue polypeptide: Chaperone protein ClpB 1 (880 aa).

Residues 6–148 form the Clp R domain; it reads PNKFTDKAWE…EASIKAVRGS (143 aa). Repeat stretches follow at residues 9 to 74 and 85 to 148; these read FTDK…TQRQ and LGRS…VRGS. Positions 161-343 are NBD1; sequence EALQKFGRDL…RRFQQVYVDQ (183 aa). Residue 208–215 participates in ATP binding; the sequence is GEPGVGKT. Residues 344 to 554 form a linker region; the sequence is PSVENTISIL…IAEIVAKWTG (211 aa). Residues 394–530 adopt a coiled-coil conformation; sequence IDLVDEAAAQ…KEAKLLELQS (137 aa). Residues 564–775 form an NBD2 region; the sequence is ERQKLLQLES…RVDDTILFHA (212 aa). 614-621 is an ATP binding site; the sequence is GPTGVGKT. The segment at 776-880 is C-terminal; it reads LSRSEMSHII…VKVSVTQITT (105 aa).

Belongs to the ClpA/ClpB family. Homohexamer. The oligomerization is ATP-dependent.

The protein localises to the cytoplasm. Part of a stress-induced multi-chaperone system, it is involved in the recovery of the cell from heat-induced damage, in cooperation with DnaK, DnaJ and GrpE. Acts before DnaK, in the processing of protein aggregates. Protein binding stimulates the ATPase activity; ATP hydrolysis unfolds the denatured protein aggregates, which probably helps expose new hydrophobic binding sites on the surface of ClpB-bound aggregates, contributing to the solubilization and refolding of denatured protein aggregates by DnaK. The protein is Chaperone protein ClpB 1 (clpB1) of Nostoc sp. (strain PCC 7120 / SAG 25.82 / UTEX 2576).